A 166-amino-acid polypeptide reads, in one-letter code: RNA pyrophosphohydrolase (166 aa).

Residues 8-158 enclose the Nudix hydrolase domain; that stretch reads PYRSCVGMML…KRPVYERVVK (151 aa). Residues 47–68 carry the Nudix box motif; it reads GGIDPGEDYWEAAQRELLEETN.

This sequence belongs to the Nudix hydrolase family. RppH subfamily. A divalent metal cation serves as cofactor.

Its function is as follows. Accelerates the degradation of transcripts by removing pyrophosphate from the 5'-end of triphosphorylated RNA, leading to a more labile monophosphorylated state that can stimulate subsequent ribonuclease cleavage. This is RNA pyrophosphohydrolase from Afipia carboxidovorans (strain ATCC 49405 / DSM 1227 / KCTC 32145 / OM5) (Oligotropha carboxidovorans).